We begin with the raw amino-acid sequence, 967 residues long: Alanine--tRNA ligase, cytoplasmic (967 aa).

Residues H605, H609, C724, and H728 each contribute to the Zn(2+) site.

Belongs to the class-II aminoacyl-tRNA synthetase family. In terms of assembly, monomer. The cofactor is Zn(2+). In terms of processing, the N-terminus is blocked.

The protein localises to the cytoplasm. It catalyses the reaction tRNA(Ala) + L-alanine + ATP = L-alanyl-tRNA(Ala) + AMP + diphosphate. Catalyzes the attachment of alanine to tRNA(Ala) in a two-step reaction: alanine is first activated by ATP to form Ala-AMP and then transferred to the acceptor end of tRNA(Ala). Also edits incorrectly charged tRNA(Ala) via its editing domain. In Bombyx mori (Silk moth), this protein is Alanine--tRNA ligase, cytoplasmic.